We begin with the raw amino-acid sequence, 229 residues long: MNPRVIRLWLPSAVLLSLVPGHFPVRGPSTVTGTVGESLSVSCQYEKKLKTKKKIWCKWKSNVLCKDIVKTSASEEARNGRVSIRDHPDNLTFTVTLENLTLEDAGTYMCMVDIGFFYDAYLQIDKSFKVEVFVVPGKPPFKGSRPGNGINILASPTSSAVHTQPNVTTDDTIPAPSPELRSLLSSPHFWILVSLKLPLFLSMLGALLWVNRPQRCSGGSSAWPCYENQ.

Residues 1 to 21 (MNPRVIRLWLPSAVLLSLVPG) form the signal peptide. The region spanning 22-126 (HFPVRGPSTV…FYDAYLQIDK (105 aa)) is the Ig-like V-type domain. The Extracellular segment spans residues 22-188 (HFPVRGPSTV…ELRSLLSSPH (167 aa)). Cys-43 and Cys-110 are joined by a disulfide. Asn-90 and Asn-99 each carry an N-linked (GlcNAc...) asparagine glycan. The helical transmembrane segment at 189-209 (FWILVSLKLPLFLSMLGALLW) threads the bilayer. Over 210–229 (VNRPQRCSGGSSAWPCYENQ) the chain is Cytoplasmic.

It belongs to the CD300 family.

The protein resides in the cell membrane. The polypeptide is CMRF35-like molecule 6 (Cd300c) (Mus musculus (Mouse)).